Here is a 173-residue protein sequence, read N- to C-terminus: Dual-action ribosomal maturation protein DarP (173 aa).

Belongs to the DarP family.

It is found in the cytoplasm. Functionally, member of a network of 50S ribosomal subunit biogenesis factors which assembles along the 30S-50S interface, preventing incorrect 23S rRNA structures from forming. Promotes peptidyl transferase center (PTC) maturation. The sequence is that of Dual-action ribosomal maturation protein DarP from Pseudomonas entomophila (strain L48).